Here is a 473-residue protein sequence, read N- to C-terminus: Photosystem II CP43 reaction center protein (473 aa).

Residues 1–14 (MKILYSLRRFYHVE) constitute a propeptide that is removed on maturation. An N-acetylthreonine modification is found at Thr-15. A Phosphothreonine modification is found at Thr-15. A run of 5 helical transmembrane segments spans residues 69-93 (LFEVAHFVPEKPMYEQGLILLPHLA), 134-155 (LLGPETLEESFPFFGYVWKDRN), 178-200 (KALYFGGVYDTWAPGGGDVRKIT), 255-275 (KPFAWARRAFVWSGEAYLSYS), and 291-312 (WFNNTAYPSEFYGPTGPEASQA). [CaMn4O5] cluster is bound at residue Glu-367. The helical transmembrane segment at 447–471 (RARAAAAGFEKGIDRDLEPVLYMNP) threads the bilayer.

This sequence belongs to the PsbB/PsbC family. PsbC subfamily. PSII is composed of 1 copy each of membrane proteins PsbA, PsbB, PsbC, PsbD, PsbE, PsbF, PsbH, PsbI, PsbJ, PsbK, PsbL, PsbM, PsbT, PsbX, PsbY, PsbZ, Psb30/Ycf12, at least 3 peripheral proteins of the oxygen-evolving complex and a large number of cofactors. It forms dimeric complexes. Binds multiple chlorophylls and provides some of the ligands for the Ca-4Mn-5O cluster of the oxygen-evolving complex. It may also provide a ligand for a Cl- that is required for oxygen evolution. PSII binds additional chlorophylls, carotenoids and specific lipids. is required as a cofactor.

Its subcellular location is the plastid. It is found in the chloroplast thylakoid membrane. Its function is as follows. One of the components of the core complex of photosystem II (PSII). It binds chlorophyll and helps catalyze the primary light-induced photochemical processes of PSII. PSII is a light-driven water:plastoquinone oxidoreductase, using light energy to abstract electrons from H(2)O, generating O(2) and a proton gradient subsequently used for ATP formation. The protein is Photosystem II CP43 reaction center protein of Lolium perenne (Perennial ryegrass).